Reading from the N-terminus, the 206-residue chain is FMN-dependent NADH:quinone oxidoreductase 2 (206 aa).

Residues S10, 16 to 18 (SYS), and 140 to 143 (SCGG) each bind FMN.

It belongs to the azoreductase type 1 family. As to quaternary structure, homodimer. Requires FMN as cofactor.

The catalysed reaction is 2 a quinone + NADH + H(+) = 2 a 1,4-benzosemiquinone + NAD(+). The enzyme catalyses N,N-dimethyl-1,4-phenylenediamine + anthranilate + 2 NAD(+) = 2-(4-dimethylaminophenyl)diazenylbenzoate + 2 NADH + 2 H(+). In terms of biological role, quinone reductase that provides resistance to thiol-specific stress caused by electrophilic quinones. Also exhibits azoreductase activity. Catalyzes the reductive cleavage of the azo bond in aromatic azo compounds to the corresponding amines. The sequence is that of FMN-dependent NADH:quinone oxidoreductase 2 from Cupriavidus pinatubonensis (strain JMP 134 / LMG 1197) (Cupriavidus necator (strain JMP 134)).